The primary structure comprises 297 residues: tRNA pseudouridine synthase B (297 aa).

Catalysis depends on Asp-41, which acts as the Nucleophile.

This sequence belongs to the pseudouridine synthase TruB family. Type 1 subfamily.

The enzyme catalyses uridine(55) in tRNA = pseudouridine(55) in tRNA. Responsible for synthesis of pseudouridine from uracil-55 in the psi GC loop of transfer RNAs. This is tRNA pseudouridine synthase B from Synechococcus sp. (strain CC9311).